A 90-amino-acid chain; its full sequence is Probable Fe(2+)-trafficking protein (90 aa).

This sequence belongs to the Fe(2+)-trafficking protein family.

Its function is as follows. Could be a mediator in iron transactions between iron acquisition and iron-requiring processes, such as synthesis and/or repair of Fe-S clusters in biosynthetic enzymes. This Methylococcus capsulatus (strain ATCC 33009 / NCIMB 11132 / Bath) protein is Probable Fe(2+)-trafficking protein.